The primary structure comprises 421 residues: Gamma-glutamyl phosphate reductase (421 aa).

It belongs to the gamma-glutamyl phosphate reductase family.

The protein localises to the cytoplasm. It carries out the reaction L-glutamate 5-semialdehyde + phosphate + NADP(+) = L-glutamyl 5-phosphate + NADPH + H(+). The protein operates within amino-acid biosynthesis; L-proline biosynthesis; L-glutamate 5-semialdehyde from L-glutamate: step 2/2. Its function is as follows. Catalyzes the NADPH-dependent reduction of L-glutamate 5-phosphate into L-glutamate 5-semialdehyde and phosphate. The product spontaneously undergoes cyclization to form 1-pyrroline-5-carboxylate. The polypeptide is Gamma-glutamyl phosphate reductase (Acinetobacter baumannii (strain ATCC 17978 / DSM 105126 / CIP 53.77 / LMG 1025 / NCDC KC755 / 5377)).